Reading from the N-terminus, the 85-residue chain is Large ribosomal subunit protein bL27 (85 aa).

The tract at residues 1–20 (MATKKAGGSTRNGRDSEAKR) is disordered.

The protein belongs to the bacterial ribosomal protein bL27 family.

The chain is Large ribosomal subunit protein bL27 from Pasteurella multocida (strain Pm70).